The sequence spans 310 residues: Vomeronasal type-1 receptor 3 (310 aa).

At 1 to 5 (MASKD) the chain is on the extracellular side. The helical transmembrane segment at 6–26 (FAIGMILSQIMVGFLGNFFLL) threads the bilayer. At 27 to 50 (YHYSFLHFTRGMLQSTDLTLKHLT) the chain is on the cytoplasmic side. The helical transmembrane segment at 51–71 (IANSLVILSKGIPQTMAAFGL) threads the bilayer. The Extracellular portion of the chain corresponds to 72-91 (KDSLSDIGCKFVFYVHRVGR). The chain crosses the membrane as a helical span at residues 92 to 112 (AVCTGNACLLSVFQVITISSS). Over 113–129 (EFRWAELKLHAHKYIRS) the chain is Cytoplasmic. A helical membrane pass occupies residues 130–150 (FILVLCWILNTLVNITVPLHV). Topologically, residues 151-186 (TGKWNSINSTKTNDYGYCSGGSRSRIPHSLHIVLLS) are extracellular. A glycan (N-linked (GlcNAc...) asparagine) is linked at N158. A helical membrane pass occupies residues 187-207 (SLDVLCLGLMTLASGSMVFIL). At 208–235 (HRLKQQVQHIHGTNLSPRSSPESRVTQS) the chain is on the cytoplasmic side. The helical transmembrane segment at 236-258 (ILVLVSTLCYFTRSPPSLHMSLF) threads the bilayer. Residues 259 to 263 (PNPSW) lie on the Extracellular side of the membrane. Residues 264–284 (WPLNASALITACFPTVSPFVL) form a helical membrane-spanning segment. At 285–310 (MSRHPRIPRLGSACCGRNPQFPKLVR) the chain is on the cytoplasmic side.

The protein belongs to the G-protein coupled receptor 1 family.

The protein resides in the cell membrane. In terms of biological role, putative pheromone receptor. This Pan troglodytes (Chimpanzee) protein is Vomeronasal type-1 receptor 3 (VN1R3).